The primary structure comprises 266 residues: Uxu operon regulator (266 aa).

The HTH gntR-type domain maps to asparagine 23–threonine 91. The H-T-H motif DNA-binding region spans glutamate 51–valine 70.

Its function is as follows. Repressor for the uxuRBA operon. The chain is Uxu operon regulator (uxuR) from Haemophilus influenzae (strain ATCC 51907 / DSM 11121 / KW20 / Rd).